Consider the following 74-residue polypeptide: ATP synthase subunit c (74 aa).

The next 2 helical transmembrane spans lie at 8 to 28 and 52 to 72; these read FIGI…VSNI and IGAG…MLLI.

The protein belongs to the ATPase C chain family. In terms of assembly, F-type ATPases have 2 components, F(1) - the catalytic core - and F(0) - the membrane proton channel. F(1) has five subunits: alpha(3), beta(3), gamma(1), delta(1), epsilon(1). F(0) has three main subunits: a(1), b(2) and c(10-14). The alpha and beta chains form an alternating ring which encloses part of the gamma chain. F(1) is attached to F(0) by a central stalk formed by the gamma and epsilon chains, while a peripheral stalk is formed by the delta and b chains.

Its subcellular location is the cell inner membrane. Its function is as follows. F(1)F(0) ATP synthase produces ATP from ADP in the presence of a proton or sodium gradient. F-type ATPases consist of two structural domains, F(1) containing the extramembraneous catalytic core and F(0) containing the membrane proton channel, linked together by a central stalk and a peripheral stalk. During catalysis, ATP synthesis in the catalytic domain of F(1) is coupled via a rotary mechanism of the central stalk subunits to proton translocation. Key component of the F(0) channel; it plays a direct role in translocation across the membrane. A homomeric c-ring of between 10-14 subunits forms the central stalk rotor element with the F(1) delta and epsilon subunits. In Rickettsia typhi (strain ATCC VR-144 / Wilmington), this protein is ATP synthase subunit c.